Consider the following 174-residue polypeptide: uncharacterized protein (174 aa).

The segment at Thr78–Glu97 is disordered.

To yeast YMR295c.

This is an uncharacterized protein from Saccharomyces cerevisiae (strain ATCC 204508 / S288c) (Baker's yeast).